Reading from the N-terminus, the 302-residue chain is RNA polymerase II holoenzyme cyclin-like subunit (302 aa).

Residues 53 to 142 (QQLIKLGKRM…LGECEFSLIS (90 aa)) enclose the Cyclin N-terminal domain.

This sequence belongs to the cyclin family. Cyclin C subfamily. Component of the srb8-11 complex, a regulatory module of the Mediator complex.

It is found in the nucleus. In terms of biological role, component of the srb8-11 complex. The srb8-11 complex is a regulatory module of the Mediator complex which is itself involved in regulation of basal and activated RNA polymerase II-dependent transcription. The srb8-11 complex may be involved in the transcriptional repression of a subset of genes regulated by Mediator. It may inhibit the association of the Mediator complex with RNA polymerase II to form the holoenzyme complex. The srb8-11 complex phosphorylates the C-terminal domain (CTD) of the largest subunit of RNA polymerase II. This is RNA polymerase II holoenzyme cyclin-like subunit (ssn8) from Aspergillus clavatus (strain ATCC 1007 / CBS 513.65 / DSM 816 / NCTC 3887 / NRRL 1 / QM 1276 / 107).